Here is a 383-residue protein sequence, read N- to C-terminus: Succinyl-diaminopimelate desuccinylase (383 aa).

His73 contacts Zn(2+). Asp75 is an active-site residue. Asp107 contacts Zn(2+). Glu141 (proton acceptor) is an active-site residue. Zn(2+)-binding residues include Glu142, Glu170, and His356.

Belongs to the peptidase M20A family. DapE subfamily. Homodimer. Zn(2+) serves as cofactor. The cofactor is Co(2+).

It carries out the reaction N-succinyl-(2S,6S)-2,6-diaminopimelate + H2O = (2S,6S)-2,6-diaminopimelate + succinate. The protein operates within amino-acid biosynthesis; L-lysine biosynthesis via DAP pathway; LL-2,6-diaminopimelate from (S)-tetrahydrodipicolinate (succinylase route): step 3/3. Its function is as follows. Catalyzes the hydrolysis of N-succinyl-L,L-diaminopimelic acid (SDAP), forming succinate and LL-2,6-diaminopimelate (DAP), an intermediate involved in the bacterial biosynthesis of lysine and meso-diaminopimelic acid, an essential component of bacterial cell walls. In Pseudomonas putida (strain W619), this protein is Succinyl-diaminopimelate desuccinylase.